The following is a 75-amino-acid chain: Metallothionein-like protein 1B (75 aa).

It belongs to the metallothionein superfamily. Type 15 family.

Functionally, metallothioneins have a high content of cysteine residues that bind various heavy metals. This Vicia faba (Broad bean) protein is Metallothionein-like protein 1B (MT1B).